The chain runs to 441 residues: GTPase Der (441 aa).

EngA-type G domains lie at 3 to 167 (PLIA…PNKT) and 176 to 351 (TRIA…EQFA). Residues 9-16 (GRPNVGKS), 56-60 (DTGGF), 119-122 (NKID), 182-189 (GRPNVGKS), 229-233 (DTAGI), and 294-297 (NKWD) each bind GTP. Positions 352-436 (KRISTSDLNR…PMRLLFKGRE (85 aa)) constitute a KH-like domain.

The protein belongs to the TRAFAC class TrmE-Era-EngA-EngB-Septin-like GTPase superfamily. EngA (Der) GTPase family. As to quaternary structure, associates with the 50S ribosomal subunit.

In terms of biological role, GTPase that plays an essential role in the late steps of ribosome biogenesis. In Geotalea daltonii (strain DSM 22248 / JCM 15807 / FRC-32) (Geobacter daltonii), this protein is GTPase Der.